The chain runs to 300 residues: SNAP25 homologous protein SNAP33 (300 aa).

2 disordered regions span residues 1–76 and 176–228; these read MFGL…QSLF and WKPK…PESA. Ser29 is subject to Phosphoserine. A compositionally biased stretch (polar residues) spans 38–49; that stretch reads TLNPSKRTTSEP. Positions 190–208 are enriched in basic and acidic residues; sequence TRDDSPTRRVNHLEKREKL. The t-SNARE coiled-coil homology domain occupies 235-297; the sequence is EMEKAKQDDG…QQSNQRGRRL (63 aa).

The protein belongs to the SNAP-25 family. Interacts with the cytokinesis-specific syntaxin KNOLLE and with SYP121. Binds to EXO70B2. In terms of tissue distribution, ubiquitous, with a strong expression in root tips, ovules, very young leaves, vascular tissue, hydathodes, stipules and the abscission and dehiscence zones of the siliques.

The protein resides in the membrane. T-SNARE involved in diverse vesicle trafficking and membrane fusion processes, including cell plate formation. May function in the secretory pathway. The polypeptide is SNAP25 homologous protein SNAP33 (Arabidopsis thaliana (Mouse-ear cress)).